The sequence spans 394 residues: Mannosyl-3-phosphoglycerate synthase (394 aa).

This sequence belongs to the glycosyltransferase 2 family.

It is found in the cytoplasm. The enzyme catalyses (2R)-3-phosphoglycerate + GDP-alpha-D-mannose = 2-O-(alpha-D-mannosyl)-3-phosphoglycerate + GDP + H(+). It functions in the pathway carbohydrate biosynthesis; 2-(alpha-D-mannosyl)-D-glycerate biosynthesis; 2-(alpha-D-mannosyl)-D-glycerate from GDP-alpha-D-mannose (MPG route): step 1/2. Its function is as follows. Transfers a mannosyl group from GDP-mannose to phosphoglycerate to form mannosyl-3-phosphoglycerate (MPG). This chain is Mannosyl-3-phosphoglycerate synthase (mngA), found in Pyrococcus furiosus (strain ATCC 43587 / DSM 3638 / JCM 8422 / Vc1).